Reading from the N-terminus, the 197-residue chain is Protein jagunal (197 aa).

The Cytoplasmic segment spans residues 1–39; that stretch reads MATRGGPMVAGTDGNDFEFRQRVAGTYQISLLNKSRLKY. A helical membrane pass occupies residues 40 to 60; the sequence is CIFFHALLFFVMLAKLTSDIL. Over 61–78 the chain is Lumenal; that stretch reads DHLDIFVLEIEELEVPPP. The chain crosses the membrane as a helical span at residues 79 to 99; sequence LWWEYVWAASLLTSFLGLSAA. Topologically, residues 100 to 109 are cytoplasmic; sequence RGNKVREMQK. Residues 110–130 traverse the membrane as a helical segment; the sequence is YMVAILLFAILPLFYCFAYYF. Residues 131 to 159 lie on the Lumenal side of the membrane; that stretch reads SDVWEFATLDKSVELDETDIFVWRGYPYG. Residues 160–180 form a helical membrane-spanning segment; that stretch reads VFWYAFCFVGFQVHGFTLYFA. The Cytoplasmic portion of the chain corresponds to 181–197; it reads YNLVKAWKARTATRKFQ.

It belongs to the jagunal family.

Its subcellular location is the endoplasmic reticulum membrane. Functionally, required for endoplasmic reticulum organization and proper vesicular traffic during vitellogenesis. Required for oocyte and bristle growth. This Drosophila melanogaster (Fruit fly) protein is Protein jagunal.